Reading from the N-terminus, the 87-residue chain is Beta-toxin Ct1a (87 aa).

An N-terminal signal peptide occupies residues methionine 1–alanine 19. The 66-residue stretch at lysine 20–asparagine 85 folds into the LCN-type CS-alpha/beta domain. Intrachain disulfides connect cysteine 31-cysteine 84, cysteine 35-cysteine 60, cysteine 44-cysteine 65, and cysteine 48-cysteine 67. Residue asparagine 85 is modified to Asparagine amide.

This sequence belongs to the long (4 C-C) scorpion toxin superfamily. Sodium channel inhibitor family. Beta subfamily. In terms of tissue distribution, expressed by the venom gland.

The protein localises to the secreted. In terms of biological role, beta toxins bind voltage-independently at site-4 of sodium channels (Nav) and shift the voltage of activation toward more negative potentials thereby affecting sodium channel activation and promoting spontaneous and repetitive firing. Is lethal to mice but does not show toxicity to freshwater shrimp and crickets. The polypeptide is Beta-toxin Ct1a (Centruroides tecomanus (Scorpion)).